The primary structure comprises 68 residues: Large ribosomal subunit protein uL29 (68 aa).

It belongs to the universal ribosomal protein uL29 family.

This chain is Large ribosomal subunit protein uL29, found in Rhodospirillum rubrum (strain ATCC 11170 / ATH 1.1.1 / DSM 467 / LMG 4362 / NCIMB 8255 / S1).